A 95-amino-acid chain; its full sequence is Small ubiquitin-related modifier 2 (95 aa).

Met1 is covalently cross-linked (Peptide (Met-Gly) (interchain with G-Cter in ubiquitin)). Residues Lys5 and Lys7 each participate in a glycyl lysine isopeptide (Lys-Gly) (interchain with G-Cter in SUMO2) cross-link. Lys11 is subject to N6-acetyllysine; alternate. Lys11 participates in a covalent cross-link: Glycyl lysine isopeptide (Lys-Gly) (interchain with G-Cter in SUMO); alternate. Residue Lys11 forms a Glycyl lysine isopeptide (Lys-Gly) (interchain with G-Cter in SUMO1); alternate linkage. Lys11 is covalently cross-linked (Glycyl lysine isopeptide (Lys-Gly) (interchain with G-Cter in SUMO2); alternate). Residue Lys11 forms a Glycyl lysine isopeptide (Lys-Gly) (interchain with G-Cter in ubiquitin); alternate linkage. In terms of domain architecture, Ubiquitin-like spans 16–95 (DHINLKVAGQ…VFQQQTGGVY (80 aa)). Lys21 participates in a covalent cross-link: Glycyl lysine isopeptide (Lys-Gly) (interchain with G-Cter in SUMO2). Gly93 participates in a covalent cross-link: Glycyl lysine isopeptide (Gly-Lys) (interchain with K-? in acceptor proteins). A propeptide spanning residues 94–95 (VY) is cleaved from the precursor.

Belongs to the ubiquitin family. SUMO subfamily. In terms of assembly, interacts with SAE2 and UBE2I. Interacts with ZNF451. Identified in a complex with ZNF451 and UBE2I/UBC9, where one ZNF451 interacts with one UBE2I/UBC9 and two SUMO2 chains, one bound to the UBE2I/UBC9 active site and the other to another region of the same UBE2I/UBC9 molecule. Covalently attached to a number of proteins. Interacts with PELP1. Interacts with USP25; the interaction sumoylates USP25. Interacts with SIMC1, CASP8AP2, RNF111 and SOBP (via SIM domains). Interacts with MTA1. Interacts with HINT1. Interacts with GCNA (via SIM domains); this interaction allows the GCNA recruitment to DPCs sites. In terms of processing, polymeric chains can be formed through Lys-11 cross-linking. Polymeric SUMO2 chains undergo 'Lys-6'-, 'Lys-11'-, 'Lys-48'- and 'Lys-63'-linked polyubiquitination by RNF4. Cleavage of precursor form by SENP1 or SENP2 is necessary for function. Post-translationally, monoubiquitinated N-terminally by UBE2W, which primes it for RNF4-dependent polyubiquitination by the UBE2V1-UBE2N heterodimer.

The protein localises to the nucleus. The protein resides in the PML body. Its function is as follows. Ubiquitin-like protein that can be covalently attached to proteins as a monomer or as a lysine-linked polymer. Covalent attachment via an isopeptide bond to its substrates requires prior activation by the E1 complex SAE1-SAE2 and linkage to the E2 enzyme UBE2I, and can be promoted by an E3 ligase such as PIAS1-4, RANBP2 or CBX4. This post-translational modification on lysine residues of proteins plays a crucial role in a number of cellular processes such as nuclear transport, DNA replication and repair, mitosis and signal transduction. Polymeric SUMO2 chains are also susceptible to polyubiquitination which functions as a signal for proteasomal degradation of modified proteins. Plays a role in the regulation of sumoylation status of SETX. The chain is Small ubiquitin-related modifier 2 from Bos taurus (Bovine).